Reading from the N-terminus, the 190-residue chain is Glycerol-3-phosphate acyltransferase 2 (190 aa).

5 helical membrane passes run 1 to 21 (MNIL…ALIV), 53 to 73 (VIVA…PLIL), 76 to 96 (TINP…SVFA), 110 to 130 (VFLF…VLTL), and 152 to 172 (LIFE…SIII).

The protein belongs to the PlsY family. As to quaternary structure, probably interacts with PlsX.

The protein resides in the cell membrane. It carries out the reaction an acyl phosphate + sn-glycerol 3-phosphate = a 1-acyl-sn-glycero-3-phosphate + phosphate. The protein operates within lipid metabolism; phospholipid metabolism. Functionally, catalyzes the transfer of an acyl group from acyl-phosphate (acyl-PO(4)) to glycerol-3-phosphate (G3P) to form lysophosphatidic acid (LPA). This enzyme utilizes acyl-phosphate as fatty acyl donor, but not acyl-CoA or acyl-ACP. In Bacillus anthracis, this protein is Glycerol-3-phosphate acyltransferase 2.